The chain runs to 593 residues: Aspartate--tRNA ligase (593 aa).

Glutamate 180 provides a ligand contact to L-aspartate. The interval 204–207 (QIFK) is aspartate. Arginine 226 serves as a coordination point for L-aspartate. ATP contacts are provided by residues 226-228 (RDE) and glutamine 235. Histidine 453 is an L-aspartate binding site. Residue glutamate 487 coordinates ATP. L-aspartate is bound at residue arginine 494. 539–542 (GLDR) serves as a coordination point for ATP.

Belongs to the class-II aminoacyl-tRNA synthetase family. Type 1 subfamily. Homodimer.

Its subcellular location is the cytoplasm. The enzyme catalyses tRNA(Asp) + L-aspartate + ATP = L-aspartyl-tRNA(Asp) + AMP + diphosphate. Functionally, catalyzes the attachment of L-aspartate to tRNA(Asp) in a two-step reaction: L-aspartate is first activated by ATP to form Asp-AMP and then transferred to the acceptor end of tRNA(Asp). The sequence is that of Aspartate--tRNA ligase from Clostridium botulinum (strain 657 / Type Ba4).